Reading from the N-terminus, the 216-residue chain is 3-isopropylmalate dehydratase small subunit 1 (216 aa).

The protein belongs to the LeuD family. LeuD type 1 subfamily. As to quaternary structure, heterodimer of LeuC and LeuD.

It catalyses the reaction (2R,3S)-3-isopropylmalate = (2S)-2-isopropylmalate. It functions in the pathway amino-acid biosynthesis; L-leucine biosynthesis; L-leucine from 3-methyl-2-oxobutanoate: step 2/4. Functionally, catalyzes the isomerization between 2-isopropylmalate and 3-isopropylmalate, via the formation of 2-isopropylmaleate. The polypeptide is 3-isopropylmalate dehydratase small subunit 1 (Bordetella bronchiseptica (strain ATCC BAA-588 / NCTC 13252 / RB50) (Alcaligenes bronchisepticus)).